The primary structure comprises 794 residues: DNA mismatch repair protein pms1 (794 aa).

Disordered regions lie at residues S351–Y384 and G409–S442. Residues Q352 to A371 are compositionally biased toward polar residues. Basic and acidic residues predominate over residues L419–R429. Polar residues predominate over residues R430–S442.

It belongs to the DNA mismatch repair MutL/HexB family.

Functionally, this protein is involved in the repair of mismatches in DNA. In Schizosaccharomyces pombe (strain 972 / ATCC 24843) (Fission yeast), this protein is DNA mismatch repair protein pms1 (pms1).